The following is a 334-amino-acid chain: Protein-methionine-sulfoxide reductase catalytic subunit MsrP (334 aa).

A signal peptide (tat-type signal) is located at residues 1-44; that stretch reads MKKNQFLKESDVTAESVFFMKRRQVLKALGISAAAFSLPHAAHA. Mo-molybdopterin-binding positions include Asn88, 91–92, Cys146, Thr181, Asn233, Arg238, and 249–251; these read YE and GIK.

It belongs to the MsrP family. Heterodimer of a catalytic subunit (MsrP) and a heme-binding subunit (MsrQ). Requires Mo-molybdopterin as cofactor. Post-translationally, predicted to be exported by the Tat system. The position of the signal peptide cleavage has not been experimentally proven.

The protein resides in the periplasm. It catalyses the reaction L-methionyl-[protein] + a quinone + H2O = L-methionyl-(S)-S-oxide-[protein] + a quinol. It carries out the reaction L-methionyl-[protein] + a quinone + H2O = L-methionyl-(R)-S-oxide-[protein] + a quinol. Its function is as follows. Part of the MsrPQ system that repairs oxidized periplasmic proteins containing methionine sulfoxide residues (Met-O), using respiratory chain electrons. Thus protects these proteins from oxidative-stress damage caused by reactive species of oxygen and chlorine generated by the host defense mechanisms. MsrPQ is essential for the maintenance of envelope integrity under bleach stress, rescuing a wide series of structurally unrelated periplasmic proteins from methionine oxidation, including the primary periplasmic chaperone SurA and the lipoprotein Pal. The catalytic subunit MsrP is non-stereospecific, being able to reduce both (R-) and (S-) diastereoisomers of methionine sulfoxide. This chain is Protein-methionine-sulfoxide reductase catalytic subunit MsrP, found in Escherichia coli O6:H1 (strain CFT073 / ATCC 700928 / UPEC).